Reading from the N-terminus, the 181-residue chain is Large ribosomal subunit protein eL18 (181 aa).

It belongs to the eukaryotic ribosomal protein eL18 family.

Its subcellular location is the cytoplasm. In Dictyostelium discoideum (Social amoeba), this protein is Large ribosomal subunit protein eL18 (rpl18).